A 211-amino-acid polypeptide reads, in one-letter code: Thiamine-phosphate synthase (211 aa).

4-amino-2-methyl-5-(diphosphooxymethyl)pyrimidine is bound by residues 36–40 and asparagine 68; that span reads QLRDK. Positions 69 and 88 each coordinate Mg(2+). Serine 107 contacts 4-amino-2-methyl-5-(diphosphooxymethyl)pyrimidine. 133 to 135 provides a ligand contact to 2-[(2R,5Z)-2-carboxy-4-methylthiazol-5(2H)-ylidene]ethyl phosphate; the sequence is TKS. Lysine 136 is a binding site for 4-amino-2-methyl-5-(diphosphooxymethyl)pyrimidine. Residues glycine 164 and 184-185 contribute to the 2-[(2R,5Z)-2-carboxy-4-methylthiazol-5(2H)-ylidene]ethyl phosphate site; that span reads IS.

This sequence belongs to the thiamine-phosphate synthase family. Mg(2+) is required as a cofactor.

The enzyme catalyses 2-[(2R,5Z)-2-carboxy-4-methylthiazol-5(2H)-ylidene]ethyl phosphate + 4-amino-2-methyl-5-(diphosphooxymethyl)pyrimidine + 2 H(+) = thiamine phosphate + CO2 + diphosphate. The catalysed reaction is 2-(2-carboxy-4-methylthiazol-5-yl)ethyl phosphate + 4-amino-2-methyl-5-(diphosphooxymethyl)pyrimidine + 2 H(+) = thiamine phosphate + CO2 + diphosphate. It carries out the reaction 4-methyl-5-(2-phosphooxyethyl)-thiazole + 4-amino-2-methyl-5-(diphosphooxymethyl)pyrimidine + H(+) = thiamine phosphate + diphosphate. It participates in cofactor biosynthesis; thiamine diphosphate biosynthesis; thiamine phosphate from 4-amino-2-methyl-5-diphosphomethylpyrimidine and 4-methyl-5-(2-phosphoethyl)-thiazole: step 1/1. In terms of biological role, condenses 4-methyl-5-(beta-hydroxyethyl)thiazole monophosphate (THZ-P) and 2-methyl-4-amino-5-hydroxymethyl pyrimidine pyrophosphate (HMP-PP) to form thiamine monophosphate (TMP). In Halalkalibacterium halodurans (strain ATCC BAA-125 / DSM 18197 / FERM 7344 / JCM 9153 / C-125) (Bacillus halodurans), this protein is Thiamine-phosphate synthase.